A 158-amino-acid chain; its full sequence is Small ribosomal subunit protein uS10m (158 aa).

It belongs to the universal ribosomal protein uS10 family.

It is found in the mitochondrion. The sequence is that of Small ribosomal subunit protein uS10m (mrps-10) from Caenorhabditis briggsae.